Here is a 71-residue protein sequence, read N- to C-terminus: ATP synthase F(0) complex subunit e, mitochondrial (71 aa).

Lysine 34 carries the post-translational modification N6-acetyllysine. Serine 68 carries the phosphoserine modification.

The protein belongs to the ATPase e subunit family. As to quaternary structure, component of the ATP synthase complex composed at least of ATP5F1A/subunit alpha, ATP5F1B/subunit beta, ATP5MC1/subunit c (homooctomer), MT-ATP6/subunit a, MT-ATP8/subunit 8, ATP5ME/subunit e, ATP5MF/subunit f, ATP5MG/subunit g, ATP5MK/subunit k, ATP5MJ/subunit j, ATP5F1C/subunit gamma, ATP5F1D/subunit delta, ATP5F1E/subunit epsilon, ATP5PF/subunit F6, ATP5PB/subunit b, ATP5PD/subunit d, ATP5PO/subunit OSCP. ATP synthase complex consists of a soluble F(1) head domain (subunits alpha(3) and beta(3)) - the catalytic core - and a membrane F(0) domain - the membrane proton channel (subunits c, a, 8, e, f, g, k and j). These two domains are linked by a central stalk (subunits gamma, delta, and epsilon) rotating inside the F1 region and a stationary peripheral stalk (subunits F6, b, d, and OSCP).

It localises to the mitochondrion. The protein resides in the mitochondrion inner membrane. Subunit e, of the mitochondrial membrane ATP synthase complex (F(1)F(0) ATP synthase or Complex V) that produces ATP from ADP in the presence of a proton gradient across the membrane which is generated by electron transport complexes of the respiratory chain. ATP synthase complex consist of a soluble F(1) head domain - the catalytic core - and a membrane F(1) domain - the membrane proton channel. These two domains are linked by a central stalk rotating inside the F(1) region and a stationary peripheral stalk. During catalysis, ATP synthesis in the catalytic domain of F(1) is coupled via a rotary mechanism of the central stalk subunits to proton translocation. In vivo, can only synthesize ATP although its ATP hydrolase activity can be activated artificially in vitro. Part of the complex F(0) domain. This is ATP synthase F(0) complex subunit e, mitochondrial from Rattus norvegicus (Rat).